Here is a 355-residue protein sequence, read N- to C-terminus: UDP-N-acetylglucosamine--N-acetylmuramyl-(pentapeptide) pyrophosphoryl-undecaprenol N-acetylglucosamine transferase (355 aa).

Residues 13 to 15 (TGG), Asn-125, Arg-162, Ser-190, Ile-244, and Gln-289 contribute to the UDP-N-acetyl-alpha-D-glucosamine site.

The protein belongs to the glycosyltransferase 28 family. MurG subfamily.

It localises to the cell inner membrane. It catalyses the reaction di-trans,octa-cis-undecaprenyl diphospho-N-acetyl-alpha-D-muramoyl-L-alanyl-D-glutamyl-meso-2,6-diaminopimeloyl-D-alanyl-D-alanine + UDP-N-acetyl-alpha-D-glucosamine = di-trans,octa-cis-undecaprenyl diphospho-[N-acetyl-alpha-D-glucosaminyl-(1-&gt;4)]-N-acetyl-alpha-D-muramoyl-L-alanyl-D-glutamyl-meso-2,6-diaminopimeloyl-D-alanyl-D-alanine + UDP + H(+). The protein operates within cell wall biogenesis; peptidoglycan biosynthesis. In terms of biological role, cell wall formation. Catalyzes the transfer of a GlcNAc subunit on undecaprenyl-pyrophosphoryl-MurNAc-pentapeptide (lipid intermediate I) to form undecaprenyl-pyrophosphoryl-MurNAc-(pentapeptide)GlcNAc (lipid intermediate II). The protein is UDP-N-acetylglucosamine--N-acetylmuramyl-(pentapeptide) pyrophosphoryl-undecaprenol N-acetylglucosamine transferase of Neisseria meningitidis serogroup A / serotype 4A (strain DSM 15465 / Z2491).